A 524-amino-acid polypeptide reads, in one-letter code: MDQEKVIVIDFGGQYNQLVARRVRECNVYCEIYSYKIDIEKIKEMNPKGIILTGGPNSCYEENSPSYRKELFELGIPVLGICYGAQLMMHKLGGKVITPEVGEYGKTEITYSANGVMFKDLPSESVCWMSHFDRIAEAAPGFEVVAHTADCPIAATQNVEKKLYAVQFHPEVLHTKNGTQMIYNFVRGVCGCAGTWKMDSFVKNTIDEIREQVGDGKVLLALSGGVDSSVLAALLAKAIGKQLTCVFVDHGLLRKNEGDEVEGVFGKDGSFDINFVRVNAQERYYSKLAGVTEPERKRKIIGEEFIRVFEEEAKKIGKVDFLAQGTIYPDVVESGLGGESAVIKSHHNVGGLPEHVDFKDIVEPLRNLFKDEVRKVGLELGLPDYLVFRQPFPGPGLGIRIIGEVTAEKVRIVQDADWIYRSEVEKAAKEYKEAHGEEPSWMPNQYFAALTNMRSVGVMGDERTYDYAVAVRAVRTVDFMTAEAAEIPFEVLQTVMSRIINEVKGVNRVFYDLTSKPPGTIEFE.

A Glutamine amidotransferase type-1 domain is found at 5 to 195 (KVIVIDFGGQ…VRGVCGCAGT (191 aa)). C82 acts as the Nucleophile in catalysis. Active-site residues include H169 and E171. The GMPS ATP-PPase domain occupies 196-389 (WKMDSFVKNT…LGLPDYLVFR (194 aa)). 223–229 (SGGVDSS) is a binding site for ATP.

As to quaternary structure, homodimer.

It carries out the reaction XMP + L-glutamine + ATP + H2O = GMP + L-glutamate + AMP + diphosphate + 2 H(+). The protein operates within purine metabolism; GMP biosynthesis; GMP from XMP (L-Gln route): step 1/1. Catalyzes the synthesis of GMP from XMP. This chain is GMP synthase [glutamine-hydrolyzing], found in Agathobacter rectalis (strain ATCC 33656 / DSM 3377 / JCM 17463 / KCTC 5835 / VPI 0990) (Eubacterium rectale).